The following is a 192-amino-acid chain: Peptidyl-prolyl cis-trans isomerase 1 (192 aa).

Positions 25 to 188 (FFDVSIGEEP…KTVTIADCGE (164 aa)) constitute a PPIase cyclophilin-type domain.

It belongs to the cyclophilin-type PPIase family.

The catalysed reaction is [protein]-peptidylproline (omega=180) = [protein]-peptidylproline (omega=0). PPIases accelerate the folding of proteins. It catalyzes the cis-trans isomerization of proline imidic peptide bonds in oligopeptides. This Caenorhabditis elegans protein is Peptidyl-prolyl cis-trans isomerase 1 (cyn-1).